The primary structure comprises 447 residues: Tubulin beta chain (447 aa).

The GTP site is built by Q11, E69, S138, G142, T143, G144, N204, and N226. E69 is a binding site for Mg(2+). Residues 425 to 447 (YQEASISEGEEEYDEEAPLEAEE) are disordered. Over residues 432 to 447 (EGEEEYDEEAPLEAEE) the composition is skewed to acidic residues.

The protein belongs to the tubulin family. In terms of assembly, dimer of alpha and beta chains. A typical microtubule is a hollow water-filled tube with an outer diameter of 25 nm and an inner diameter of 15 nM. Alpha-beta heterodimers associate head-to-tail to form protofilaments running lengthwise along the microtubule wall with the beta-tubulin subunit facing the microtubule plus end conferring a structural polarity. Microtubules usually have 13 protofilaments but different protofilament numbers can be found in some organisms and specialized cells. Requires Mg(2+) as cofactor.

It localises to the cytoplasm. The protein localises to the cytoskeleton. Its function is as follows. Tubulin is the major constituent of microtubules, a cylinder consisting of laterally associated linear protofilaments composed of alpha- and beta-tubulin heterodimers. Microtubules grow by the addition of GTP-tubulin dimers to the microtubule end, where a stabilizing cap forms. Below the cap, tubulin dimers are in GDP-bound state, owing to GTPase activity of alpha-tubulin. The polypeptide is Tubulin beta chain (tubB) (Phaeosphaeria nodorum (strain SN15 / ATCC MYA-4574 / FGSC 10173) (Glume blotch fungus)).